Reading from the N-terminus, the 185-residue chain is Large ribosomal subunit protein eL19 (185 aa).

The tract at residues 152–185 (SDKLTSQQEARRAKNTASRAKRNEKAQIVAKVDV) is disordered.

Belongs to the eukaryotic ribosomal protein eL19 family.

The chain is Large ribosomal subunit protein eL19 (RPL19) from Tetrahymena thermophila (strain SB210).